Consider the following 429-residue polypeptide: Enolase (429 aa).

(2R)-2-phosphoglycerate is bound at residue Q163. E205 serves as the catalytic Proton donor. The Mg(2+) site is built by D242, E287, and D314. 4 residues coordinate (2R)-2-phosphoglycerate: K339, R368, S369, and K390. Residue K339 is the Proton acceptor of the active site.

Belongs to the enolase family. It depends on Mg(2+) as a cofactor.

The protein resides in the cytoplasm. The protein localises to the secreted. Its subcellular location is the cell surface. It carries out the reaction (2R)-2-phosphoglycerate = phosphoenolpyruvate + H2O. The protein operates within carbohydrate degradation; glycolysis; pyruvate from D-glyceraldehyde 3-phosphate: step 4/5. Functionally, catalyzes the reversible conversion of 2-phosphoglycerate (2-PG) into phosphoenolpyruvate (PEP). It is essential for the degradation of carbohydrates via glycolysis. The polypeptide is Enolase (Anaeromyxobacter dehalogenans (strain 2CP-C)).